Consider the following 426-residue polypeptide: tRNA(Ile)-lysidine synthase (426 aa).

27-32 (SGGADS) contacts ATP.

Belongs to the tRNA(Ile)-lysidine synthase family.

It is found in the cytoplasm. It catalyses the reaction cytidine(34) in tRNA(Ile2) + L-lysine + ATP = lysidine(34) in tRNA(Ile2) + AMP + diphosphate + H(+). In terms of biological role, ligates lysine onto the cytidine present at position 34 of the AUA codon-specific tRNA(Ile) that contains the anticodon CAU, in an ATP-dependent manner. Cytidine is converted to lysidine, thus changing the amino acid specificity of the tRNA from methionine to isoleucine. This chain is tRNA(Ile)-lysidine synthase, found in Bacteroides thetaiotaomicron (strain ATCC 29148 / DSM 2079 / JCM 5827 / CCUG 10774 / NCTC 10582 / VPI-5482 / E50).